Reading from the N-terminus, the 427-residue chain is Trigger factor (427 aa).

A PPIase FKBP-type domain is found at 163-248 (GDTVVIDFVG…VNEVKAKELP (86 aa)).

This sequence belongs to the FKBP-type PPIase family. Tig subfamily.

The protein resides in the cytoplasm. It carries out the reaction [protein]-peptidylproline (omega=180) = [protein]-peptidylproline (omega=0). Functionally, involved in protein export. Acts as a chaperone by maintaining the newly synthesized protein in an open conformation. Functions as a peptidyl-prolyl cis-trans isomerase. This is Trigger factor from Lactococcus lactis subsp. cremoris (strain MG1363).